The following is a 264-amino-acid chain: uncharacterized protein (264 aa).

The helical transmembrane segment at 7 to 27 (LTLGICLVLLIILIVGYVIMT) threads the bilayer.

This sequence belongs to the staphylococcal tandem lipoprotein family.

It localises to the cell membrane. This is an uncharacterized protein from Staphylococcus aureus (strain NCTC 8325 / PS 47).